The sequence spans 282 residues: Putative 23S rRNA (guanine-N(1)-)-methyltransferase YxjB (282 aa).

Zn(2+) contacts are provided by Cys12, Cys15, Cys29, and His34. Residue 103–104 (EG) coordinates S-adenosyl-L-methionine.

It belongs to the methyltransferase superfamily. RlmA family.

The chain is Putative 23S rRNA (guanine-N(1)-)-methyltransferase YxjB (yxjB) from Bacillus subtilis (strain 168).